Here is a 437-residue protein sequence, read N- to C-terminus: Aspartic proteinase nepenthesin-1 (437 aa).

The signal sequence occupies residues 1–24; the sequence is MASSLYSFLLALSIVYIFVAPTHS. Positions 25–78 are cleaved as a propeptide — activation peptide; the sequence is TSRTALNHRHEAKVTGFQIMLEHVDSGKNLTKFQLLERAIERGSRRLQRLEAML. 2 N-linked (GlcNAc...) asparagine glycosylation sites follow: asparagine 53 and asparagine 98. The 336-residue stretch at 95–430 folds into the Peptidase A1 domain; the sequence is YLMNLSIGTP…DTGNSVVSFA (336 aa). Aspartate 113 is an active-site residue. Cystine bridges form between cysteine 123–cysteine 126, cysteine 129–cysteine 203, cysteine 150–cysteine 168, cysteine 155–cysteine 163, cysteine 240–cysteine 434, and cysteine 354–cysteine 395. An N-linked (GlcNAc...) asparagine glycan is attached at asparagine 131. 3 N-linked (GlcNAc...) asparagine glycosylation sites follow: asparagine 198, asparagine 267, and asparagine 307. Residue aspartate 315 is part of the active site. Asparagine 345 is a glycosylation site (N-linked (GlcNAc...) asparagine).

This sequence belongs to the peptidase A1 family.

The protein localises to the secreted. It catalyses the reaction Similar to pepsin, but also cleaves on either side of Asp and at Lys-|-Arg.. With respect to regulation, inhibited by pepstatin and by diazoacetyl-D,L-norleucine methyl ester (DAN) in the presence of Cu(2+) ions. Its function is as follows. Extracellular proteinase found in the pitcher fluid of carnivorous plants. Digest prey for nitrogen uptake. This chain is Aspartic proteinase nepenthesin-1 (nep1), found in Nepenthes gracilis (Slender pitcher plant).